Reading from the N-terminus, the 183-residue chain is Streptavidin-V2 (183 aa).

The N-terminal stretch at Met1–Ala24 is a signal peptide. One can recognise an Avidin-like domain in the interval Ala37–Pro159. The biotin site is built by Tyr67 and Tyr78. The Cell attachment site; atypical motif lies at Arg83–Asp85. Biotin is bound by residues Trp116, Trp132, and Trp144.

Belongs to the avidin/streptavidin family. As to quaternary structure, homotetramer.

Its subcellular location is the secreted. In terms of biological role, the biological function of streptavidin is not known. Forms a strong non-covalent specific complex with biotin (one molecule of biotin per subunit of streptavidin). The protein is Streptavidin-V2 of Streptomyces violaceus (Streptomyces venezuelae).